Here is a 307-residue protein sequence, read N- to C-terminus: MNHATSELHDESAVTSIPETTRLQDLKALVKMGIVNSNTLTVFTGFWLALHFNGLSVMDNLDKLFFTIVGSGLVMAGVCCLNNYIDRDIDPLMERTKTRPTVTGKYKPGFALTFGLVILLLGFVFLLLTTPMAVLMGFIGAFTYVVLYSLWTKRKYTLNTVVGSISGAVPPLIGWAAIDPSLGHPIAWMLFLIMFIWQIPHFLALAMKRVDEYRNAGIPMLPVVHGFEITKRQIMIWTVCLLPLPFYMSGLGITFMVIATLLNIGWIVLGFYGFRKKDDIKWSVQMFVYSLNYLTILFVSMIVVTFF.

A run of 8 helical transmembrane segments spans residues 32–52 (MGIV…ALHF), 65–85 (FFTI…NNYI), 108–128 (PGFA…FLLL), 131–151 (PMAV…YSLW), 158–178 (LNTV…WAAI), 186–206 (IAWM…LALA), 251–271 (LGIT…VLGF), and 287–307 (FVYS…VTFF).

The protein belongs to the UbiA prenyltransferase family. Protoheme IX farnesyltransferase subfamily. As to quaternary structure, interacts with CtaA.

The protein localises to the cell membrane. The catalysed reaction is heme b + (2E,6E)-farnesyl diphosphate + H2O = Fe(II)-heme o + diphosphate. It participates in porphyrin-containing compound metabolism; heme O biosynthesis; heme O from protoheme: step 1/1. Converts heme B (protoheme IX) to heme O by substitution of the vinyl group on carbon 2 of heme B porphyrin ring with a hydroxyethyl farnesyl side group. This chain is Protoheme IX farnesyltransferase, found in Bacillus anthracis (strain A0248).